The primary structure comprises 381 residues: Putative 2-heptyl-3-hydroxy-4(1H)-quinolone synthase AqdB1 (381 aa).

This sequence belongs to the 3-hydroxybenzoate 6-hydroxylase family.

The enzyme catalyses 2-heptyl-4(1H)-quinolone + NADH + O2 + H(+) = 2-heptyl-3-hydroxy-4(1H)-quinolone + NAD(+) + H2O. In terms of biological role, could be involved in the degradation of the Pseudomonas aeruginosa quorum sensing signal molecule HHQ (2-heptyl-4-quinolone) to anthranilic acid. May catalyze the hydroxylation of HHQ to PQS (2-heptyl-3-hydroxy-4-quinolone). The sequence is that of Putative 2-heptyl-3-hydroxy-4(1H)-quinolone synthase AqdB1 from Rhodococcus erythropolis (Arthrobacter picolinophilus).